The following is a 452-amino-acid chain: Isocitrate dehydrogenase [NADP], mitochondrial (452 aa).

The transit peptide at 1–39 (MAGYLRAVSSLCRASGSARTWAPAALTVPSWPEQPRRHY) directs the protein to the mitochondrion. An N6-acetyllysine mark is found at K45, K48, K67, and K69. N6-acetyllysine; alternate is present on residues K80 and K106. N6-succinyllysine; alternate is present on residues K80 and K106. Residues 115 to 117 (TIT) and R122 each bind NADP(+). T117 is a D-threo-isocitrate binding site. Residues 134 to 140 (SPNGTIR) and R149 contribute to the D-threo-isocitrate site. K155 carries the N6-acetyllysine modification. Position 166 is an N6-acetyllysine; alternate (K166). K166 is modified (N6-succinyllysine; alternate). A D-threo-isocitrate-binding site is contributed by R172. Residues K180 and K193 each carry the N6-acetyllysine; alternate modification. K180 and K193 each carry N6-succinyllysine; alternate. N6-acetyllysine is present on K199. Position 256 is an N6-acetyllysine; alternate (K256). K256 carries the N6-succinyllysine; alternate modification. K263, K272, K275, and K280 each carry N6-acetyllysine. K282 is subject to N6-acetyllysine; alternate. N6-succinyllysine; alternate is present on K282. D291 contributes to the Mn(2+) binding site. Position 299 (K299) interacts with NADP(+). D314 serves as a coordination point for Mn(2+). Residues 349-354 (GTVTRH) and N367 contribute to the NADP(+) site. Position 384 is an N6-acetyllysine; alternate (K384). K384 bears the N6-succinyllysine; alternate mark. Residues K400, K413, and K442 each carry the N6-acetyllysine modification.

It belongs to the isocitrate and isopropylmalate dehydrogenases family. As to quaternary structure, homodimer. Mg(2+) serves as cofactor. Requires Mn(2+) as cofactor. Post-translationally, acetylation at Lys-413 dramatically reduces catalytic activity. Deacetylated by SIRT3. As to expression, predominantly expressed in heart, liver and kidney. Expressed in activated B lymphocytes.

It is found in the mitochondrion. The catalysed reaction is D-threo-isocitrate + NADP(+) = 2-oxoglutarate + CO2 + NADPH. Plays a role in intermediary metabolism and energy production. It may tightly associate or interact with the pyruvate dehydrogenase complex. This chain is Isocitrate dehydrogenase [NADP], mitochondrial (Idh2), found in Mus musculus (Mouse).